We begin with the raw amino-acid sequence, 119 residues long: Beta-2-microglobulin (119 aa).

Residues 1–20 form the signal peptide; it reads MARFVVVALLVLLSLSGLEA. An Ig-like C1-type domain is found at 25–114; the sequence is PKIQVYSRHP…VTLSTPKTVK (90 aa). Cys-45 and Cys-100 are oxidised to a cystine.

The protein belongs to the beta-2-microglobulin family. In terms of assembly, heterodimer of an alpha chain and a beta chain. Beta-2-microglobulin is the beta-chain of major histocompatibility complex class I molecules.

It localises to the secreted. Component of the class I major histocompatibility complex (MHC). Involved in the presentation of peptide antigens to the immune system. The chain is Beta-2-microglobulin (B2M) from Aotus lemurinus (Gray-bellied night monkey).